The primary structure comprises 387 residues: 3-ketoacyl-CoA thiolase (387 aa).

Residue cysteine 91 is the Acyl-thioester intermediate of the active site. Catalysis depends on proton acceptor residues histidine 343 and cysteine 373.

Belongs to the thiolase-like superfamily. Thiolase family. As to quaternary structure, heterotetramer of two alpha chains (FadB) and two beta chains (FadA).

Its subcellular location is the cytoplasm. The catalysed reaction is an acyl-CoA + acetyl-CoA = a 3-oxoacyl-CoA + CoA. The protein operates within lipid metabolism; fatty acid beta-oxidation. Its function is as follows. Catalyzes the final step of fatty acid oxidation in which acetyl-CoA is released and the CoA ester of a fatty acid two carbons shorter is formed. This chain is 3-ketoacyl-CoA thiolase, found in Vibrio vulnificus (strain YJ016).